Here is a 1336-residue protein sequence, read N- to C-terminus: pre-mRNA 3' end processing protein WDR33 (1336 aa).

Ala2 carries the N-acetylalanine modification. Ser7 carries the phosphoserine modification. Lys46 carries the N6-acetyllysine modification. 7 WD repeats span residues 117–156, 159–198, 200–239, 242–283, 286–325, 329–369, and 373–412; these read KVKC…FETI, AHDS…VKMF, AHKE…EERI, GHGA…SLAT, AHKN…EELQ, GHKK…EVGG, and AHEG…DKMR. Residues Lys526, Lys530, and Lys560 each participate in a glycyl lysine isopeptide (Lys-Gly) (interchain with G-Cter in SUMO2) cross-link. Residues 568–1336 form a disordered region; it reads QVEQIQPPPS…GASRGGGRGR (769 aa). The span at 573–590 shows a compositional bias: pro residues; it reads QPPPSSGTPLLGPQPFPG. Polar residues predominate over residues 594–607; that stretch reads MSQIPQGFQQPHPS. Over residues 608–643 the composition is skewed to low complexity; sequence QQMPMNMAQMGPPGPQGQFRPPGPQGQMGPQGPPLH. A Collagen-like domain is found at 618-770; the sequence is GPPGPQGQFR…GPGSQGIQGP (153 aa). Residues 683–695 are compositionally biased toward pro residues; it reads PHGPLGPQGPPGP. Low complexity-rich tracts occupy residues 696-707 and 726-751; these read QGSSGPQGHMGP and QGHL…GMQG. Residue Arg782 is modified to Omega-N-methylarginine. The span at 854–869 shows a compositional bias: low complexity; sequence GPPGSQSQQGPPQGSL. The residue at position 915 (Arg915) is an Asymmetric dimethylarginine. A compositionally biased stretch (low complexity) spans 932 to 941; that stretch reads PGLGQQGAQG. Composition is skewed to basic and acidic residues over residues 971–989 and 998–1034; these read SERR…ERGP and GPPD…EFEG. Position 987 is an omega-N-methylarginine (Arg987). Omega-N-methylarginine is present on Arg1035. 2 stretches are compositionally biased toward basic and acidic residues: residues 1056–1068 and 1078–1122; these read PDHR…DGRG and EGRR…RGRD. Acidic residues predominate over residues 1130-1140; it reads FGPEENFDASE. Over residues 1141–1150 the composition is skewed to basic and acidic residues; sequence EAARGRDLRG. The span at 1151 to 1160 shows a compositional bias: basic residues; that stretch reads RGRGTPRGGR. Composition is skewed to basic and acidic residues over residues 1169-1217 and 1242-1259; these read EFPR…RERS and SEHR…DRGG. Ser1210 is subject to Phosphoserine. Arg1262 carries the post-translational modification Omega-N-methylarginine. Residues 1281–1293 are compositionally biased toward basic and acidic residues; the sequence is DGEHHDGYHRDEP. Residues 1301–1326 are compositionally biased toward low complexity; the sequence is GTPSRGGRSGSNWGRGSNMNSGPPRR. Residue Arg1315 is modified to Asymmetric dimethylarginine; alternate. Residue Arg1315 is modified to Omega-N-methylarginine; alternate.

This sequence belongs to the WD repeat WDR33 family. In terms of assembly, component of the cleavage and polyadenylation specificity factor (CPSF) module of the pre-mRNA 3'-end processing complex. Interacts with CPSF3/CPSF73. As to expression, most highly expressed in testis.

It is found in the nucleus. Its function is as follows. Essential for both cleavage and polyadenylation of pre-mRNA 3' ends. This Homo sapiens (Human) protein is pre-mRNA 3' end processing protein WDR33 (WDR33).